The chain runs to 377 residues: Queuine tRNA-ribosyltransferase (377 aa).

Asp89 serves as the catalytic Proton acceptor. Residues 89-93 (DSGGF), Asp143, Gln188, and Gly215 contribute to the substrate site. Residues 246–252 (GVGKPED) form an RNA binding region. Catalysis depends on Asp265, which acts as the Nucleophile. The RNA binding; important for wobble base 34 recognition stretch occupies residues 270–274 (TRNAR). Zn(2+)-binding residues include Cys303, Cys305, Cys308, and His334.

Belongs to the queuine tRNA-ribosyltransferase family. As to quaternary structure, homodimer. Within each dimer, one monomer is responsible for RNA recognition and catalysis, while the other monomer binds to the replacement base PreQ1. The cofactor is Zn(2+).

It catalyses the reaction 7-aminomethyl-7-carbaguanine + guanosine(34) in tRNA = 7-aminomethyl-7-carbaguanosine(34) in tRNA + guanine. Its pathway is tRNA modification; tRNA-queuosine biosynthesis. Catalyzes the base-exchange of a guanine (G) residue with the queuine precursor 7-aminomethyl-7-deazaguanine (PreQ1) at position 34 (anticodon wobble position) in tRNAs with GU(N) anticodons (tRNA-Asp, -Asn, -His and -Tyr). Catalysis occurs through a double-displacement mechanism. The nucleophile active site attacks the C1' of nucleotide 34 to detach the guanine base from the RNA, forming a covalent enzyme-RNA intermediate. The proton acceptor active site deprotonates the incoming PreQ1, allowing a nucleophilic attack on the C1' of the ribose to form the product. After dissociation, two additional enzymatic reactions on the tRNA convert PreQ1 to queuine (Q), resulting in the hypermodified nucleoside queuosine (7-(((4,5-cis-dihydroxy-2-cyclopenten-1-yl)amino)methyl)-7-deazaguanosine). The protein is Queuine tRNA-ribosyltransferase of Acinetobacter baumannii (strain ACICU).